We begin with the raw amino-acid sequence, 732 residues long: Translation initiation factor IF-2 (732 aa).

The interval 40–147 (PEVVEKLDHT…QQEQPMKKEK (108 aa)) is disordered. A compositionally biased stretch (basic and acidic residues) spans 42-67 (VVEKLDHTYNKKNERPQASAPKEKQK). The segment covering 90–103 (KVPKKKSANKKKEG) has biased composition (basic residues). Basic and acidic residues predominate over residues 104 to 117 (KKHDLQLQQQEKKI). Over residues 118–129 (FHQQKKKIKGKA) the composition is skewed to basic residues. One can recognise a tr-type G domain in the interval 233–402 (ERPPVVTIMG…LLVSEMEELK (170 aa)). Residues 242–249 (GHVDHGKT) form a G1 region. 242–249 (GHVDHGKT) is a GTP binding site. Positions 267 to 271 (GITQH) are G2. The tract at residues 288-291 (DTPG) is G3. GTP-binding positions include 288-292 (DTPGH) and 342-345 (NKMD). Residues 342–345 (NKMD) are G4. A G5 region spans residues 378–380 (SAK).

This sequence belongs to the TRAFAC class translation factor GTPase superfamily. Classic translation factor GTPase family. IF-2 subfamily.

The protein localises to the cytoplasm. Its function is as follows. One of the essential components for the initiation of protein synthesis. Protects formylmethionyl-tRNA from spontaneous hydrolysis and promotes its binding to the 30S ribosomal subunits. Also involved in the hydrolysis of GTP during the formation of the 70S ribosomal complex. The protein is Translation initiation factor IF-2 of Geobacillus sp. (strain WCH70).